The primary structure comprises 1423 residues: DNA-directed RNA polymerase subunit beta' (1423 aa).

Zn(2+) contacts are provided by cysteine 70, cysteine 72, cysteine 85, and cysteine 88. Residues aspartate 461, aspartate 463, and aspartate 465 each contribute to the Mg(2+) site. Positions 809, 883, 890, and 893 each coordinate Zn(2+). Residues 1383 to 1423 (EEHAAELRQPVQADTGDDPLGAVVGESHGTDADAGDYLTEE) form a disordered region.

It belongs to the RNA polymerase beta' chain family. As to quaternary structure, the RNAP catalytic core consists of 2 alpha, 1 beta, 1 beta' and 1 omega subunit. When a sigma factor is associated with the core the holoenzyme is formed, which can initiate transcription. It depends on Mg(2+) as a cofactor. The cofactor is Zn(2+).

The catalysed reaction is RNA(n) + a ribonucleoside 5'-triphosphate = RNA(n+1) + diphosphate. Its function is as follows. DNA-dependent RNA polymerase catalyzes the transcription of DNA into RNA using the four ribonucleoside triphosphates as substrates. The polypeptide is DNA-directed RNA polymerase subunit beta' (Rhizorhabdus wittichii (strain DSM 6014 / CCUG 31198 / JCM 15750 / NBRC 105917 / EY 4224 / RW1) (Sphingomonas wittichii)).